A 264-amino-acid polypeptide reads, in one-letter code: NADH-quinone oxidoreductase subunit I 2 (264 aa).

4Fe-4S ferredoxin-type domains lie at 57–86 (GFLE…ISLE) and 98–127 (TQFD…HTRE). [4Fe-4S] cluster contacts are provided by cysteine 66, cysteine 69, cysteine 72, cysteine 76, cysteine 107, cysteine 110, cysteine 113, and cysteine 117. Residues 183–264 (APQFLPPEPP…AAPAANPESK (82 aa)) form a disordered region. Over residues 197–264 (AKPAAKAAPA…AAPAANPESK (68 aa)) the composition is skewed to low complexity.

The protein belongs to the complex I 23 kDa subunit family. NDH-1 is composed of 14 different subunits. Subunits NuoA, H, J, K, L, M, N constitute the membrane sector of the complex. [4Fe-4S] cluster is required as a cofactor.

The protein localises to the cell inner membrane. It catalyses the reaction a quinone + NADH + 5 H(+)(in) = a quinol + NAD(+) + 4 H(+)(out). NDH-1 shuttles electrons from NADH, via FMN and iron-sulfur (Fe-S) centers, to quinones in the respiratory chain. The immediate electron acceptor for the enzyme in this species is believed to be ubiquinone. Couples the redox reaction to proton translocation (for every two electrons transferred, four hydrogen ions are translocated across the cytoplasmic membrane), and thus conserves the redox energy in a proton gradient. The polypeptide is NADH-quinone oxidoreductase subunit I 2 (Anaeromyxobacter dehalogenans (strain 2CP-C)).